The following is a 420-amino-acid chain: Gamma-glutamyl phosphate reductase (420 aa).

This sequence belongs to the gamma-glutamyl phosphate reductase family.

The protein resides in the cytoplasm. The catalysed reaction is L-glutamate 5-semialdehyde + phosphate + NADP(+) = L-glutamyl 5-phosphate + NADPH + H(+). It functions in the pathway amino-acid biosynthesis; L-proline biosynthesis; L-glutamate 5-semialdehyde from L-glutamate: step 2/2. Catalyzes the NADPH-dependent reduction of L-glutamate 5-phosphate into L-glutamate 5-semialdehyde and phosphate. The product spontaneously undergoes cyclization to form 1-pyrroline-5-carboxylate. The chain is Gamma-glutamyl phosphate reductase from Neisseria meningitidis serogroup B (strain ATCC BAA-335 / MC58).